The following is a 362-amino-acid chain: MLKVGSSLLAADGGGLSPRFALGLAQFVSANLAAGRELVIVSSGAVAAGRAILPKAVDVGAPIAARQALAALGQAQLIALWQRFFERPVAQVLLTHDDLRNRRRYLNARATLGELLRLGALPVINENDTVSVDELKLGDNDNLAAIVAALVDADALFIATDIDGLYSADPRSNPLARPLDDVPELTPEVLAMAGGSGSNVGTGGMRTKLEAAAKAGAAGIETYLFNGRSGEVVRALAQDRLRGTRIHAARTRIAARKYWLRHAPVEAGAILVDAGAAMALSDKGASLLPGGVVGAEGDFRRGDMVEIRLRDDEGERCLARGVSQYSAVDIRRIARRHSREIENVLGYSYGENVVHRDDLVLL.

Lys3 contacts ATP. Residues Ser43, Asp128, and Asn140 each coordinate substrate. ATP is bound by residues 160–161 and 202–208; these read TD and TGGMRTK. The 82-residue stretch at 267–348 folds into the PUA domain; that stretch reads AGAILVDAGA…REIENVLGYS (82 aa).

This sequence belongs to the glutamate 5-kinase family.

The protein localises to the cytoplasm. It carries out the reaction L-glutamate + ATP = L-glutamyl 5-phosphate + ADP. The protein operates within amino-acid biosynthesis; L-proline biosynthesis; L-glutamate 5-semialdehyde from L-glutamate: step 1/2. Its function is as follows. Catalyzes the transfer of a phosphate group to glutamate to form L-glutamate 5-phosphate. The protein is Glutamate 5-kinase of Xanthomonas oryzae pv. oryzae (strain KACC10331 / KXO85).